Consider the following 602-residue polypeptide: Elongation factor 4 (602 aa).

The region spanning 7–189 (SKIRNFCIIA…AIVRRVPPPQ (183 aa)) is the tr-type G domain. Residues 19 to 24 (DHGKST) and 136 to 139 (NKVD) contribute to the GTP site.

The protein belongs to the TRAFAC class translation factor GTPase superfamily. Classic translation factor GTPase family. LepA subfamily.

It is found in the cell inner membrane. It carries out the reaction GTP + H2O = GDP + phosphate + H(+). Functionally, required for accurate and efficient protein synthesis under certain stress conditions. May act as a fidelity factor of the translation reaction, by catalyzing a one-codon backward translocation of tRNAs on improperly translocated ribosomes. Back-translocation proceeds from a post-translocation (POST) complex to a pre-translocation (PRE) complex, thus giving elongation factor G a second chance to translocate the tRNAs correctly. Binds to ribosomes in a GTP-dependent manner. The polypeptide is Elongation factor 4 (Prochlorococcus marinus (strain MIT 9215)).